Consider the following 827-residue polypeptide: SID1 transmembrane family member 1 (827 aa).

Residues 1-19 (MLDCLRLALLCALPWLLRA) form the signal peptide. The Extracellular segment spans residues 20 to 309 (AVPGHQEEPL…SIKESVYVKS (290 aa)). 4 N-linked (GlcNAc...) asparagine glycosylation sites follow: Asn-67, Asn-83, Asn-136, and Asn-282. Residues 310-330 (SLFSIFVFLSFYLGCLLVVLV) form a helical membrane-spanning segment. Residues 331–442 (HHVRFQRKSI…DRRIVSKKYK (112 aa)) lie on the Cytoplasmic side of the membrane. Residues 344 to 409 (FGSSDGSGNM…VEESDFDTMP (66 aa)) are disordered. Over residues 375 to 386 (SSSSPGRQMSSS) the composition is skewed to low complexity. Residues 398-409 (SSVEESDFDTMP) show a composition bias toward acidic residues. The helical transmembrane segment at 443–463 (IYFWNIITIAVFYALPVMQLV) threads the bilayer. The Extracellular segment spans residues 464–494 (ITYQTVVNVTGNQDICYYNFLCAHPLGVLSA). An N-linked (GlcNAc...) asparagine glycan is attached at Asn-471. A helical membrane pass occupies residues 495–515 (FNNILSNLGHVLLGFLFLLIV). The Cytoplasmic segment spans residues 516-541 (LRRDLLHRRALEAKDIFAMEYGIPKH). Residues 542-562 (FGLFYAMGIALMMEGVLSACY) traverse the membrane as a helical segment. Residues 563 to 572 (HVCPNYSNFQ) lie on the Extracellular side of the membrane. A glycan (N-linked (GlcNAc...) asparagine) is linked at Asn-567. The chain crosses the membrane as a helical span at residues 573 to 590 (FDTSFMYMIAGLCMLKLY). Residues 591–600 (QTRHPDINAS) lie on the Cytoplasmic side of the membrane. Residues 601–621 (AYSAYASFAVVITLTVLGVVF) traverse the membrane as a helical segment. The Extracellular segment spans residues 622-626 (GKNDV). A helical membrane pass occupies residues 627–647 (WFWIIFSAIHILSSLALSTQI). Over 648 to 683 (YYMGRFKIDLGIFRRAAMVFYTDCIQQCSRPLYMDR) the chain is Cytoplasmic. The chain crosses the membrane as a helical span at residues 684 to 704 (MVLLIVGNLVNWSFAFFGLIY). The Extracellular portion of the chain corresponds to 705-710 (RPRDFA). The helical transmembrane segment at 711-731 (SYMLGIFICNLLLYLAFYIIM) threads the bilayer. Over 732 to 741 (KLRSSEKVLP) the chain is Cytoplasmic. The helical transmembrane segment at 742 to 762 (LPVFCIAATAVVWAAALYFFF) threads the bilayer. Over 763-791 (QNLSSWEGTPAESREKNRECVLLDFFDDH) the chain is Extracellular. N-linked (GlcNAc...) asparagine glycosylation occurs at Asn-764. The chain crosses the membrane as a helical span at residues 792–812 (DIWHFLSATALFFSFLVLLTL). Residues 813–827 (DDDLDVVRRDQIPVF) are Cytoplasmic-facing.

The protein belongs to the SID1 family.

It is found in the membrane. Its function is as follows. In vitro binds long double-stranded RNA (dsRNA) (500 and 700 base pairs), but not dsRNA shorter than 300 bp. Not involved in RNA autophagy, a process in which RNA is directly imported into lysosomes in an ATP-dependent manner, and degraded. The chain is SID1 transmembrane family member 1 (Sidt1) from Mus musculus (Mouse).